The following is a 379-amino-acid chain: RING finger protein 215 (379 aa).

2 disordered regions span residues 1–21 and 44–63; these read MGSA…PPSP and AADG…RSVR. Residues 1–24 lie on the Cytoplasmic side of the membrane; that stretch reads MGSADRPALRSPSLPPPPPSPPSP. A helical transmembrane segment spans residues 25 to 45; it reads LLLLLPLLPLWLGLMGPGAAA. At 46–252 the chain is on the extracellular side; it reads DGSEPATGEG…GGAQAQEQKP (207 aa). N-linked (GlcNAc...) asparagine glycosylation is present at asparagine 188. A helical membrane pass occupies residues 253–273; that stretch reads LQQLWNAILLVAMLLCTGLVV. At 274–379 the chain is on the cytoplasmic side; it reads QAQRQASRQN…NVLGNHYSDD (106 aa). An RING-type; atypical zinc finger spans residues 327 to 368; that stretch reads CAVCLDYFCNKQWLRVLPCKHEFHRDCVDPWLMLQQTCPLCK.

It localises to the membrane. In Mus musculus (Mouse), this protein is RING finger protein 215 (Rnf215).